Here is a 700-residue protein sequence, read N- to C-terminus: Methionine--tRNA ligase (700 aa).

Positions 14-24 (PYANGPVHLGH) match the 'HIGH' region motif. Zn(2+) contacts are provided by Cys146, Cys149, Cys159, and Cys162. The short motif at 344–348 (KFSKS) is the 'KMSKS' region element. Lys347 contacts ATP. The region spanning 599-700 (DFLKVDLRVA…GEEINGRQIQ (102 aa)) is the tRNA-binding domain.

Belongs to the class-I aminoacyl-tRNA synthetase family. MetG type 1 subfamily. As to quaternary structure, homodimer. The cofactor is Zn(2+).

The protein resides in the cytoplasm. The enzyme catalyses tRNA(Met) + L-methionine + ATP = L-methionyl-tRNA(Met) + AMP + diphosphate. Its function is as follows. Is required not only for elongation of protein synthesis but also for the initiation of all mRNA translation through initiator tRNA(fMet) aminoacylation. The chain is Methionine--tRNA ligase from Pelodictyon phaeoclathratiforme (strain DSM 5477 / BU-1).